A 331-amino-acid chain; its full sequence is D/L-glyceraldehyde reductase (331 aa).

Tyr-51 (proton donor) is an active-site residue. His-114 contacts substrate. NADP(+) is bound at residue 213–276 (SAFGNNTKGL…SVTKARIAEN (64 aa)).

This sequence belongs to the aldo/keto reductase family.

It carries out the reaction glycerol + NADP(+) = L-glyceraldehyde + NADPH + H(+). The catalysed reaction is glycerol + NADP(+) = D-glyceraldehyde + NADPH + H(+). The protein operates within carbohydrate acid metabolism. Mediates the conversion of L-glyceraldehyde to glycerol in D-galacturonate catabolic process. Also able to reduce D-glyceraldehyde. The sequence is that of D/L-glyceraldehyde reductase (gld1) from Hypocrea jecorina (Trichoderma reesei).